The following is a 307-amino-acid chain: Pyridoxal 5'-phosphate synthase subunit PdxS (307 aa).

Positions methionine 1–arginine 10 are enriched in basic residues. Residues methionine 1–proline 20 form a disordered region. Residue aspartate 37 participates in D-ribose 5-phosphate binding. The Schiff-base intermediate with D-ribose 5-phosphate role is filled by lysine 94. Position 166 (glycine 166) interacts with D-ribose 5-phosphate. Residue arginine 178 participates in D-glyceraldehyde 3-phosphate binding. D-ribose 5-phosphate contacts are provided by residues glycine 227 and glycine 248 to serine 249.

The protein belongs to the PdxS/SNZ family. In terms of assembly, in the presence of PdxT, forms a dodecamer of heterodimers.

It carries out the reaction aldehydo-D-ribose 5-phosphate + D-glyceraldehyde 3-phosphate + L-glutamine = pyridoxal 5'-phosphate + L-glutamate + phosphate + 3 H2O + H(+). The protein operates within cofactor biosynthesis; pyridoxal 5'-phosphate biosynthesis. Catalyzes the formation of pyridoxal 5'-phosphate from ribose 5-phosphate (RBP), glyceraldehyde 3-phosphate (G3P) and ammonia. The ammonia is provided by the PdxT subunit. Can also use ribulose 5-phosphate and dihydroxyacetone phosphate as substrates, resulting from enzyme-catalyzed isomerization of RBP and G3P, respectively. The chain is Pyridoxal 5'-phosphate synthase subunit PdxS from Deinococcus radiodurans (strain ATCC 13939 / DSM 20539 / JCM 16871 / CCUG 27074 / LMG 4051 / NBRC 15346 / NCIMB 9279 / VKM B-1422 / R1).